Consider the following 347-residue polypeptide: Beta-hexosaminidase (347 aa).

Residues aspartate 62, arginine 70, arginine 134, and 164 to 165 contribute to the substrate site; that span reads KH. Histidine 177 functions as the Proton donor/acceptor in the catalytic mechanism. Aspartate 249 acts as the Nucleophile in catalysis.

Belongs to the glycosyl hydrolase 3 family. NagZ subfamily.

It is found in the cytoplasm. The enzyme catalyses Hydrolysis of terminal non-reducing N-acetyl-D-hexosamine residues in N-acetyl-beta-D-hexosaminides.. Its pathway is cell wall biogenesis; peptidoglycan recycling. Plays a role in peptidoglycan recycling by cleaving the terminal beta-1,4-linked N-acetylglucosamine (GlcNAc) from peptide-linked peptidoglycan fragments, giving rise to free GlcNAc, anhydro-N-acetylmuramic acid and anhydro-N-acetylmuramic acid-linked peptides. The protein is Beta-hexosaminidase of Mannheimia succiniciproducens (strain KCTC 0769BP / MBEL55E).